The following is an 89-amino-acid chain: MSAPRYKSGSAKKVYKKAPGNSSIVHYRRKKQSNAVCGACGALLNGVPRGRAVEITKLAKTQKRPERAFGGNLCPKCVKKMMVAKARNF.

The protein belongs to the eukaryotic ribosomal protein eL34 family.

The sequence is that of Large ribosomal subunit protein eL34 from Methanococcus maripaludis (strain C6 / ATCC BAA-1332).